The sequence spans 270 residues: Putative phosphoenolpyruvate synthase regulatory protein (270 aa).

G149–T156 serves as a coordination point for ADP.

Belongs to the pyruvate, phosphate/water dikinase regulatory protein family. PSRP subfamily.

The enzyme catalyses [pyruvate, water dikinase] + ADP = [pyruvate, water dikinase]-phosphate + AMP + H(+). It carries out the reaction [pyruvate, water dikinase]-phosphate + phosphate + H(+) = [pyruvate, water dikinase] + diphosphate. Bifunctional serine/threonine kinase and phosphorylase involved in the regulation of the phosphoenolpyruvate synthase (PEPS) by catalyzing its phosphorylation/dephosphorylation. The polypeptide is Putative phosphoenolpyruvate synthase regulatory protein (Pseudoalteromonas atlantica (strain T6c / ATCC BAA-1087)).